The sequence spans 328 residues: CCAAT/enhancer-binding protein beta (328 aa).

The residue at position 3 (Arg-3) is an Asymmetric dimethylarginine; by CARM1. At Lys-39 the chain carries N6-methylated lysine. The tract at residues Asp-165 to Lys-274 is disordered. Residues Ser-200–Ala-231 show a composition bias toward low complexity. A Phosphothreonine; by RPS6KA1, CDK2 and MAPK modification is found at Thr-220. Over residues Lys-248–Asn-264 the composition is skewed to basic and acidic residues. Positions Ser-254–Leu-317 constitute a bZIP domain. The tract at residues Lys-258–Arg-278 is basic motif. A leucine-zipper region spans residues Leu-280–Leu-287.

This sequence belongs to the bZIP family. C/EBP subfamily. As to quaternary structure, binds DNA as a dimer. Interacts (not methylated) with MED23, MED26, SMARCA2, SMARCB1 and SMARCC1. Post-translationally, methylated. Methylation at Arg-3 by CARM1 and at Lys-39 by EHMT2, inhibit transactivation activity. Methylation is probably inhibited by phosphorylation at Thr-220. In terms of tissue distribution, specifically expressed in myelomoncytic cells.

Its subcellular location is the nucleus. Its function is as follows. Important transcriptional activator regulating the expression of genes involved in immune and inflammatory responses. Binds to regulatory regions of several acute-phase and cytokines genes and probably plays a role in the regulation of acute-phase reaction, inflammation and hemopoiesis. The consensus recognition site is 5'-T[TG]NNGNAA[TG]-3'. Functions in brown adipose tissue (BAT) differentiation. Regulates the transcriptional induction of peroxisome proliferator-activated receptor gamma (PPARG). Binds to the MGF and MIM-1 promoters and activates the transcription of these genes. Functionally, important transcription factor regulating the expression of genes involved in immune and inflammatory responses. Also plays a significant role in adipogenesis, as well as in the gluconeogenic pathway, liver regeneration, and hematopoiesis. The consensus recognition site is 5'-T[TG]NNGNAA[TG]-3'. Its functional capacity is governed by protein interactions and post-translational protein modifications. This is CCAAT/enhancer-binding protein beta (CEBPB) from Gallus gallus (Chicken).